We begin with the raw amino-acid sequence, 286 residues long: MLRVAVPNKGSLSEAASAMLSEAGYRQRRDTRELVMVDPDNDIEFFFLRPRDIAVYVGQGTLDVGITGRDLLLDAKVEAEELLPLGFAPSTFRFAGPVGDFSGVEQLEGKRLATSYDGLLRDYLAERGVNAKVVRLDGAVESSVRLGVADAIADVVETGNTLKAAGMEIFGDPILKSEAVLIRRSGSGGAANGTAKEIEILIRRLQGVLVARQYVLMDYDIRKDLVEDAAALTPGLESPTVSPLRDSEWVAVRSMVPKKETNRIMDELYDLGARAILVSSIHACRI.

The protein belongs to the ATP phosphoribosyltransferase family. Long subfamily. Mg(2+) serves as cofactor.

Its subcellular location is the cytoplasm. The catalysed reaction is 1-(5-phospho-beta-D-ribosyl)-ATP + diphosphate = 5-phospho-alpha-D-ribose 1-diphosphate + ATP. It participates in amino-acid biosynthesis; L-histidine biosynthesis; L-histidine from 5-phospho-alpha-D-ribose 1-diphosphate: step 1/9. Its activity is regulated as follows. Feedback inhibited by histidine. In terms of biological role, catalyzes the condensation of ATP and 5-phosphoribose 1-diphosphate to form N'-(5'-phosphoribosyl)-ATP (PR-ATP). Has a crucial role in the pathway because the rate of histidine biosynthesis seems to be controlled primarily by regulation of HisG enzymatic activity. In Paenarthrobacter aurescens (strain TC1), this protein is ATP phosphoribosyltransferase.